A 360-amino-acid chain; its full sequence is Phenylalanine--tRNA ligase alpha subunit (360 aa).

Glutamate 260 provides a ligand contact to Mg(2+).

The protein belongs to the class-II aminoacyl-tRNA synthetase family. Phe-tRNA synthetase alpha subunit type 1 subfamily. Tetramer of two alpha and two beta subunits. The cofactor is Mg(2+).

It localises to the cytoplasm. It carries out the reaction tRNA(Phe) + L-phenylalanine + ATP = L-phenylalanyl-tRNA(Phe) + AMP + diphosphate + H(+). The chain is Phenylalanine--tRNA ligase alpha subunit from Rhizobium etli (strain CIAT 652).